The primary structure comprises 380 residues: N5-carboxyaminoimidazole ribonucleotide synthase (380 aa).

ATP is bound by residues arginine 108, lysine 148, 153 to 159 (GYDGKGQ), 183 to 186 (ESWV), glutamate 191, histidine 214, and 268 to 269 (NE). The ATP-grasp domain occupies 112-298 (KKAIQSAGCE…QFEQHIRAVC (187 aa)).

It belongs to the PurK/PurT family. As to quaternary structure, homodimer.

It carries out the reaction 5-amino-1-(5-phospho-beta-D-ribosyl)imidazole + hydrogencarbonate + ATP = 5-carboxyamino-1-(5-phospho-D-ribosyl)imidazole + ADP + phosphate + 2 H(+). Its pathway is purine metabolism; IMP biosynthesis via de novo pathway; 5-amino-1-(5-phospho-D-ribosyl)imidazole-4-carboxylate from 5-amino-1-(5-phospho-D-ribosyl)imidazole (N5-CAIR route): step 1/2. In terms of biological role, catalyzes the ATP-dependent conversion of 5-aminoimidazole ribonucleotide (AIR) and HCO(3)(-) to N5-carboxyaminoimidazole ribonucleotide (N5-CAIR). This Bacillus subtilis (strain 168) protein is N5-carboxyaminoimidazole ribonucleotide synthase.